Consider the following 215-residue polypeptide: MRDSGRSVSRRGGRGPKIERIANRYGLDGLGDDLVDAWLGDGRAQRSLRELEGDVNKRLIRAALDEAGAHVLDGEAENFYRLLTGDDVTAGSRTDARNTLRERGVDVEQLEADIISYQSVYNYLKRHRNVEREDDDDDETDATEAGLATIRKLRSRLRTVTIDVVDRLVKAERVFIGAYEVEVDIRVTCTDCDTRMTPTALLSSGHCDCERERDE.

In terms of biological role, involved in cell-shape determination. Required for the formation of rods and wild-type-like motility. This chain is Rod-determining factor A, found in Haloferax volcanii (strain ATCC 29605 / DSM 3757 / JCM 8879 / NBRC 14742 / NCIMB 2012 / VKM B-1768 / DS2) (Halobacterium volcanii).